We begin with the raw amino-acid sequence, 268 residues long: tRNA pseudouridine synthase A (268 aa).

Catalysis depends on Asp-52, which acts as the Nucleophile. Residue Tyr-110 participates in substrate binding.

Belongs to the tRNA pseudouridine synthase TruA family. As to quaternary structure, homodimer.

It catalyses the reaction uridine(38/39/40) in tRNA = pseudouridine(38/39/40) in tRNA. Functionally, formation of pseudouridine at positions 38, 39 and 40 in the anticodon stem and loop of transfer RNAs. The chain is tRNA pseudouridine synthase A from Prochlorococcus marinus (strain AS9601).